The following is a 299-amino-acid chain: MLDKTRLRIAMQKSGRLSDDSRELLARCGIKINLQQQRLIAFAENMPIDILRVRDDDIPGLVMDGVVDLGIIGENVLEEELLNRRAQGEDPRYFTLRRLDFGGCRLSLAMPLDEDYTGPECLQNKRIATSYPHLLKQYLDRKSVSFKSCLLNGSVEVAPRAGLADAICDLVSTGATLEANGLREVEVIYRSKACLIQRDGEMPAEKQQLIDKLLTRMQGVIQARESKYIMLHAPSERLEEVISLLPGAERPTILPLAGDQSRVAMHMVSSETLFWETMEKLKSLGASSILVLPIEKMME.

Belongs to the ATP phosphoribosyltransferase family. Long subfamily. As to quaternary structure, equilibrium between an active dimeric form, an inactive hexameric form and higher aggregates. Interconversion between the various forms is largely reversible and is influenced by the natural substrates and inhibitors of the enzyme. Requires Mg(2+) as cofactor.

The protein resides in the cytoplasm. The enzyme catalyses 1-(5-phospho-beta-D-ribosyl)-ATP + diphosphate = 5-phospho-alpha-D-ribose 1-diphosphate + ATP. The protein operates within amino-acid biosynthesis; L-histidine biosynthesis; L-histidine from 5-phospho-alpha-D-ribose 1-diphosphate: step 1/9. With respect to regulation, feedback inhibited by histidine. Its function is as follows. Catalyzes the condensation of ATP and 5-phosphoribose 1-diphosphate to form N'-(5'-phosphoribosyl)-ATP (PR-ATP). Has a crucial role in the pathway because the rate of histidine biosynthesis seems to be controlled primarily by regulation of HisG enzymatic activity. This chain is ATP phosphoribosyltransferase, found in Pectobacterium carotovorum subsp. carotovorum (strain PC1).